We begin with the raw amino-acid sequence, 417 residues long: Serine--tRNA ligase (417 aa).

226 to 228 (TSE) is an L-serine binding site. ATP-binding positions include 257-259 (RRE) and Val273. Residue Glu280 participates in L-serine binding. 344-347 (ELTS) is an ATP binding site. Thr379 serves as a coordination point for L-serine.

It belongs to the class-II aminoacyl-tRNA synthetase family. Type-1 seryl-tRNA synthetase subfamily. In terms of assembly, homodimer. The tRNA molecule binds across the dimer.

It localises to the cytoplasm. The enzyme catalyses tRNA(Ser) + L-serine + ATP = L-seryl-tRNA(Ser) + AMP + diphosphate + H(+). It catalyses the reaction tRNA(Sec) + L-serine + ATP = L-seryl-tRNA(Sec) + AMP + diphosphate + H(+). It participates in aminoacyl-tRNA biosynthesis; selenocysteinyl-tRNA(Sec) biosynthesis; L-seryl-tRNA(Sec) from L-serine and tRNA(Sec): step 1/1. Its function is as follows. Catalyzes the attachment of serine to tRNA(Ser). Is also able to aminoacylate tRNA(Sec) with serine, to form the misacylated tRNA L-seryl-tRNA(Sec), which will be further converted into selenocysteinyl-tRNA(Sec). The chain is Serine--tRNA ligase from Mycobacterium sp. (strain JLS).